The chain runs to 186 residues: dCTP deaminase, dUMP-forming (186 aa).

Residues 99-104 (KSSIAR), Asp117, 125-127 (TLE), Gln146, Tyr159, Lys166, and Gln170 contribute to the dCTP site. The active-site Proton donor/acceptor is the Glu127.

Belongs to the dCTP deaminase family. Homotrimer.

It carries out the reaction dCTP + 2 H2O = dUMP + NH4(+) + diphosphate. Its pathway is pyrimidine metabolism; dUMP biosynthesis; dUMP from dCTP: step 1/1. Functionally, bifunctional enzyme that catalyzes both the deamination of dCTP to dUTP and the hydrolysis of dUTP to dUMP without releasing the toxic dUTP intermediate. The sequence is that of dCTP deaminase, dUMP-forming from Methanosphaerula palustris (strain ATCC BAA-1556 / DSM 19958 / E1-9c).